The chain runs to 456 residues: Potassium voltage-gated channel subfamily A member 7 (456 aa).

The helical transmembrane segment at 144 to 164 (VLAVVSVLVILVSIVVFCLET) threads the bilayer. N-linked (GlcNAc...) asparagine glycosylation is present at asparagine 191. Residues 209-229 (FFVVETLCICWFSFELLVRLL) traverse the membrane as a helical segment. Cysteine 231 carries the S-palmitoyl cysteine lipid modification. The chain crosses the membrane as a helical span at residues 241–261 (VMNLIDFVAILPYFVALGTEL). A helical; Voltage-sensor membrane pass occupies residues 276–295 (ILRVIRLVRVFRIFKLSRHS). A helical transmembrane segment spans residues 312–332 (LGLLIFFLFIGVVLFSSAVYF). The short motif at 358-363 (TVGYGD) is the Selectivity filter element. The chain crosses the membrane as a helical span at residues 373-393 (IVGSLCAIAGVLTISLPVPVI).

Belongs to the potassium channel family. A (Shaker) (TC 1.A.1.2) subfamily. Kv1.7/KCNA7 sub-subfamily. Heterotetramer of potassium channel proteins. In terms of tissue distribution, highly expressed in skeletal muscle, heart and kidney.

It localises to the membrane. The catalysed reaction is K(+)(in) = K(+)(out). Mediates the voltage-dependent potassium ion permeability of excitable membranes. Assuming opened or closed conformations in response to the voltage difference across the membrane, the protein forms a potassium-selective channel through which potassium ions may pass in accordance with their electrochemical gradient. The chain is Potassium voltage-gated channel subfamily A member 7 (KCNA7) from Homo sapiens (Human).